Consider the following 519-residue polypeptide: MGQLKQLAGILALASPAIAAFSVYALHDPDALKASLGVTSECLSALNYTVECDGPSAVRATKNSDNDPWSMDDLTTLCTDGCSKSLSTWFDAVEQKCEGEEVTINGLVVDPKAFPMKYISGYDLACLRDSNDNWCFYEAQDWDSGVFTSWDKKQPDACSGENPPADCDKKGSEEDVDTLYVTNSYDKELYCSECFMLLWRQRIESPVFPQGNLLDHFTKQFSKLEAACSTKLPLTTPAPTVVLGAKDTLPPATGYHTDGSTVFRYSSPPAPTITTEEPIAKRTAAPRAMKTFYTPATPDRTPQLGAMAPCGKYYNVVAGDTCASISSEFEVTMDELLTYNPELHPNCENLWANFAICVAPVSPNPMTVDGSCGENNAGATCDGSPFGSCCNNEGRCVPCGPEATAAPDAPDAQGQTVHDDEPPEEPHIEEPPKDIPAGDDDDRKKAKLPLPSGKYPLPSNSTMISKDGSCNEYISCVGSPFGVCCSTSGWCGYGKPWCGVGNCVSGYCDTEDKASGKPQ.

The signal sequence occupies residues 1-19; sequence MGQLKQLAGILALASPAIA. N-linked (GlcNAc...) asparagine glycosylation occurs at asparagine 47. Residues 312–358 enclose the LysM domain; the sequence is KYYNVVAGDTCASISSEFEVTMDELLTYNPELHPNCENLWANFAICV. Positions 314–358 are lysM domain; the sequence is YNVVAGDTCASISSEFEVTMDELLTYNPELHPNCENLWANFAICV. Residues 407-416 show a composition bias toward low complexity; sequence PDAPDAQGQT. A disordered region spans residues 407-458; sequence PDAPDAQGQTVHDDEPPEEPHIEEPPKDIPAGDDDDRKKAKLPLPSGKYPLP. Positions 417–433 are enriched in basic and acidic residues; that stretch reads VHDDEPPEEPHIEEPPK. Asparagine 460 is a glycosylation site (N-linked (GlcNAc...) asparagine). The Chitin-binding type-1 domain maps to 467 to 510; that stretch reads DGSCNEYISCVGSPFGVCCSTSGWCGYGKPWCGVGNCVSGYCDT. 4 cysteine pairs are disulfide-bonded: cysteine 470-cysteine 485, cysteine 476-cysteine 491, cysteine 484-cysteine 498, and cysteine 503-cysteine 508.

Its subcellular location is the secreted. Its function is as follows. Might have a role in sequestration of chitin oligosaccharides (breakdown products of fungal cell walls that are released during invasion and act as triggers of host immunity) to dampen host defense. This chain is LysM domain-containing protein ARB_03442, found in Arthroderma benhamiae (strain ATCC MYA-4681 / CBS 112371) (Trichophyton mentagrophytes).